The chain runs to 658 residues: MENTLSALRSLMASHSPPLDALVVPSEDYHQSEYVSARDKRREFVSGFSGSAGLALITKDVALLWTDGRYFLQAEQQLSDEWKLMRIGEDPAVDTWMADNLLKEASIGVDPWCISIDTAQRWERSFAEKQQKLVQTTKNLVDEVWADRPPAEINAVVVQPLKFAGRSVADKLKDLRKKLVQEQARGIIFTSLDEVAWLYNIRGNDVAYCPVVHAFAIVTSNSAFLYVDKRKVSAEVKSHLEENGIEIREYTAVSFDVALLATDELDTTSTAKDTLAEITKQAEKFVSETNKSVNGKHQAKENSNNLIWADPGSCCYAVYSKLNPDTVLLQQSPLALAKALKNPVELEGLKQAHIRDGAAVVQYLVWLDKQMQDIFGASGYFSEGNTVKKEELSQSLKLTEVTVSDKLEGFRASKKHFRGLSFPTISSVGPNGAVIHYSPKAETCAELDPDKIYLFDSGAQYLDGTTDITRTVHFGKPSAHEKACYTAVLKGHIALGNAVFPNGTNGHALDILARIPLWKNGLDYRHGTGHGIGSYLNVHEGPHLISFKPRNVPLQSSMTVTDEPGYYEDGAFGIRLENVLIINEADTKFNFGDKGYLSFEHITWAPYQTKLIDLNLLTPDEINWLNSYHSRCRDILQPHLDDAAENEWLKKATEPVGV.

Arginine 69 and histidine 436 together coordinate a peptide. 3 residues coordinate Mn(2+): aspartate 456, aspartate 467, and histidine 530. Positions 530, 539, and 563 each coordinate a peptide. Glutamate 563 and glutamate 577 together coordinate Mn(2+).

Belongs to the peptidase M24B family. As to quaternary structure, homodimer. Interacts with N-1-naphthylphthalamic acid (NPA). Interacts with NBCL/BOP2/COCH around the plasma membrane and in the nucleus; this interaction disturbs its regulation of the nuclear transcription factor Y subunit (NF-YA1). The cofactor is Mn(2+). Requires Zn(2+) as cofactor. Expressed at similar levels in shoot apical meristems (SAM), root meristems (RM), root apical meristems (RAM), roots and leaves and, to a slightly lesser degree, in root nodules.

Its subcellular location is the nucleus. It localises to the cytoplasm. It is found in the cell membrane. The protein resides in the microsome membrane. The catalysed reaction is Release of any N-terminal amino acid, including proline, that is linked to proline, even from a dipeptide or tripeptide.. Catalyzes the removal of a penultimate prolyl residue from the N-termini of peptides, such as Arg-Pro-Pro. Aminopeptidase that binds to the auxin transport inhibitor N-1-naphthylphthalamic acid (NPA). May play a negative role in the regulation of PIN auxin transport proteins. Involved in the coordination of the symbiotic nodule developmental program; prevents the formation of root nodules by regulating the expression of the nuclear transcription factor Y subunit (NF-YA1), a key nodulin. The sequence is that of Aminopeptidase P1 from Lotus japonicus (Lotus corniculatus var. japonicus).